Reading from the N-terminus, the 389-residue chain is Type 2 DNA topoisomerase 6 subunit A (389 aa).

Residues 13–161 form the Topo IIA-type catalytic domain; that stretch reads KARLRAAEVM…MLILSKEKGK (149 aa). The active-site O-(5'-phospho-DNA)-tyrosine intermediate is tyrosine 107. 2 residues coordinate Mg(2+): glutamate 208 and aspartate 260.

The protein belongs to the TOP6A family. Homodimer. Heterotetramer of two Top6A and two Top6B chains. It depends on Mg(2+) as a cofactor.

It catalyses the reaction ATP-dependent breakage, passage and rejoining of double-stranded DNA.. Relaxes both positive and negative superturns and exhibits a strong decatenase activity. This is Type 2 DNA topoisomerase 6 subunit A from Aeropyrum pernix (strain ATCC 700893 / DSM 11879 / JCM 9820 / NBRC 100138 / K1).